The primary structure comprises 236 residues: Orotidine 5'-phosphate decarboxylase (236 aa).

Substrate is bound by residues aspartate 17, lysine 39, 66 to 75 (DLKFHDIPNT), threonine 125, arginine 186, glutamine 195, glycine 215, and arginine 216. The active-site Proton donor is the lysine 68.

Belongs to the OMP decarboxylase family. Type 1 subfamily. Homodimer.

The enzyme catalyses orotidine 5'-phosphate + H(+) = UMP + CO2. Its pathway is pyrimidine metabolism; UMP biosynthesis via de novo pathway; UMP from orotate: step 2/2. Its function is as follows. Catalyzes the decarboxylation of orotidine 5'-monophosphate (OMP) to uridine 5'-monophosphate (UMP). In Buchnera aphidicola subsp. Acyrthosiphon pisum (strain APS) (Acyrthosiphon pisum symbiotic bacterium), this protein is Orotidine 5'-phosphate decarboxylase.